Reading from the N-terminus, the 664-residue chain is Methionine--tRNA ligase (664 aa).

A 'HIGH' region motif is present at residues 13–23 (PYTNGPCHIGH). C144, C147, C156, and C160 together coordinate Zn(2+). Residues 327–331 (KFSKS) carry the 'KMSKS' region motif. ATP is bound at residue K330. The tRNA-binding domain occupies 566-664 (EFGNLDIRIA…RPVKPGTKIR (99 aa)).

It belongs to the class-I aminoacyl-tRNA synthetase family. MetG type 1 subfamily. As to quaternary structure, homodimer. The cofactor is Zn(2+).

The protein localises to the cytoplasm. The catalysed reaction is tRNA(Met) + L-methionine + ATP = L-methionyl-tRNA(Met) + AMP + diphosphate. Its function is as follows. Is required not only for elongation of protein synthesis but also for the initiation of all mRNA translation through initiator tRNA(fMet) aminoacylation. This chain is Methionine--tRNA ligase, found in Methanoculleus marisnigri (strain ATCC 35101 / DSM 1498 / JR1).